Reading from the N-terminus, the 115-residue chain is Probable non-functional T cell receptor beta variable 7-3 (115 aa).

The first 21 residues, 1–21 (MGTRLLCWAALCLLGADHTGA), serve as a signal peptide directing secretion. The region spanning 22 to 115 (GVSQTPSNKV…SAAYLRASSL (94 aa)) is the Ig-like domain.

In terms of assembly, most probably, the alpha-beta TR is not assembled due to incorrect folding of the beta chain. Alpha-beta TR is a heterodimer composed of an alpha and beta chain; disulfide-linked. The alpha-beta TR is associated with the transmembrane signaling CD3 coreceptor proteins to form the TR-CD3 (TcR or TCR). The assembly of alpha-beta TR heterodimers with CD3 occurs in the endoplasmic reticulum where a single alpha-beta TR heterodimer associates with one CD3D-CD3E heterodimer, one CD3G-CD3E heterodimer and one CD247 homodimer forming a stable octameric structure. CD3D-CD3E and CD3G-CD3E heterodimers preferentially associate with TR alpha and TR beta chains, respectively. The association of the CD247 homodimer is the last step of TcR assembly in the endoplasmic reticulum and is required for transport to the cell surface.

It localises to the cell membrane. Its function is as follows. Probable non-functional open reading frame (ORF) of V region of the variable domain of T cell receptor (TR) beta chain. Non-functional ORF generally cannot participate in the synthesis of a productive T cell receptor (TR) chain due to altered V-(D)-J or switch recombination and/or splicing site (at mRNA level) and/or conserved amino acid change (protein level). Alpha-beta T cell receptors are antigen specific receptors which are essential to the immune response and are present on the cell surface of T lymphocytes. Recognize peptide-major histocompatibility (MH) (pMH) complexes that are displayed by antigen presenting cells (APC), a prerequisite for efficient T cell adaptive immunity against pathogens. Binding of alpha-beta TR to pMH complex initiates TR-CD3 clustering on the cell surface and intracellular activation of LCK that phosphorylates the ITAM motifs of CD3G, CD3D, CD3E and CD247 enabling the recruitment of ZAP70. In turn ZAP70 phosphorylates LAT, which recruits numerous signaling molecules to form the LAT signalosome. The LAT signalosome propagates signal branching to three major signaling pathways, the calcium, the mitogen-activated protein kinase (MAPK) kinase and the nuclear factor NF-kappa-B (NF-kB) pathways, leading to the mobilization of transcription factors that are critical for gene expression and essential for T cell growth and differentiation. The T cell repertoire is generated in the thymus, by V-(D)-J rearrangement. This repertoire is then shaped by intrathymic selection events to generate a peripheral T cell pool of self-MH restricted, non-autoaggressive T cells. Post-thymic interaction of alpha-beta TR with the pMH complexes shapes TR structural and functional avidity. This is Probable non-functional T cell receptor beta variable 7-3 from Homo sapiens (Human).